A 314-amino-acid polypeptide reads, in one-letter code: Mitochondrial thiamine pyrophosphate carrier 1 (314 aa).

Helical transmembrane passes span 14–30 (VAAW…GLLA), 84–100 (LLYV…YSLF), 116–136 (LVVG…FDVL), 170–186 (GSIA…SIMF), 217–233 (SAGT…TFPL), and 285–302 (GILV…VSFW). Solcar repeat units lie at residues 14–103 (VAAW…FNRY), 110–195 (EARL…IRIY), and 210–310 (ELAT…AIHY).

This sequence belongs to the mitochondrial carrier (TC 2.A.29) family.

The protein localises to the mitochondrion inner membrane. In terms of biological role, mitochondrial transporter that mediates uptake of thiamine pyrophosphate (ThPP) into mitochondria. This is Mitochondrial thiamine pyrophosphate carrier 1 (TPC1) from Saccharomyces cerevisiae (strain YJM789) (Baker's yeast).